The chain runs to 384 residues: MDIIQKSIFNSGPHSRGIYEPPLGYFTPYNTPPYIAAYSDSGSWLADHHQHHQQQHQQHQQQMQHIRFPTPPITPPRPIAGYGYRQRTQSVIMKARGQQDELCRSPVEFPDDSKSCSSSSECGTASDFVCNWTDCDRVFDTLDALAQHVTQRHAIASLTDGLYYCRWRGCQRSERGFNARYKMLVHTRTHTKEKPHRCHLCEKSFSRAENLKIHIRSHSGEKPYKCSFEGCQKAYSNSSDRFKHTRTHSMEKPYMCKVAGCQKRYTDPSSLRKHVKTFKHSIHLIASQPLTLPSVPCLLEASSESAFTCLPAASSVESTSSSSSARYYDDSNNEPSDYSLKPKQDAEFSPSYWLGDRQHSYLHSEDFFVKMDVESPLDLRIHRI.

The C2H2-type 1 zinc finger occupies Phe-128–His-153. A C2H2-type 2; degenerate zinc finger spans residues Tyr-163–His-190. 3 consecutive C2H2-type zinc fingers follow at residues His-196–His-218, Tyr-224–His-248, and Tyr-254–His-280. The segment at Ser-321–Lys-343 is disordered.

Belongs to the GLI C2H2-type zinc-finger protein family.

It is found in the nucleus. Its function is as follows. Transcription factor which represses a set of lipase genes involved in fat catabolism. The polypeptide is Zinc finger protein GLIS2 homolog (sug) (Drosophila melanogaster (Fruit fly)).